Here is a 90-residue protein sequence, read N- to C-terminus: Phenol 2-monooxygenase, stimulatory component DmpM (90 aa).

The protein belongs to the TmoD/XamoD family. In terms of assembly, active as a monomer. Formation of dimers inactivates the protein. The multicomponent enzyme phenol hydroxylase is formed by DmpL (P1 component), DmpM (P2 component), DmpN (P3 component), DmpO (P4 component) and DmpP (P5 component).

The enzyme catalyses phenol + NADH + O2 + H(+) = catechol + NAD(+) + H2O. It participates in aromatic compound metabolism; phenol degradation. Part of a multicomponent enzyme which catalyzes the degradation of phenol and some of its methylated derivatives. DmpM is a regulatory subunit that stimulates the phenol hydroxylase activity of the complex. The steady-state rate of phenol hydroxylase turnover is dependent on the DmpM concentration, with a maximum observed rate at about 1.5 DmpM per oxygenase monomer. Higher concentrations of DmpM inhibit phenol hydroxylase activity. May act by altering the redox potential of the oxygenase. Required for growth on phenol and for in vitro phenol hydroxylase activity. In Pseudomonas sp. (strain CF600), this protein is Phenol 2-monooxygenase, stimulatory component DmpM.